Here is a 420-residue protein sequence, read N- to C-terminus: ATP phosphoribosyltransferase regulatory subunit (420 aa).

Belongs to the class-II aminoacyl-tRNA synthetase family. HisZ subfamily. In terms of assembly, heteromultimer composed of HisG and HisZ subunits.

It is found in the cytoplasm. It functions in the pathway amino-acid biosynthesis; L-histidine biosynthesis; L-histidine from 5-phospho-alpha-D-ribose 1-diphosphate: step 1/9. In terms of biological role, required for the first step of histidine biosynthesis. May allow the feedback regulation of ATP phosphoribosyltransferase activity by histidine. The polypeptide is ATP phosphoribosyltransferase regulatory subunit (Synechococcus sp. (strain ATCC 27144 / PCC 6301 / SAUG 1402/1) (Anacystis nidulans)).